A 288-amino-acid chain; its full sequence is ATP synthase gamma chain (288 aa).

Belongs to the ATPase gamma chain family. In terms of assembly, F-type ATPases have 2 components, CF(1) - the catalytic core - and CF(0) - the membrane proton channel. CF(1) has five subunits: alpha(3), beta(3), gamma(1), delta(1), epsilon(1). CF(0) has three main subunits: a, b and c.

The protein resides in the cell inner membrane. Its function is as follows. Produces ATP from ADP in the presence of a proton gradient across the membrane. The gamma chain is believed to be important in regulating ATPase activity and the flow of protons through the CF(0) complex. This is ATP synthase gamma chain from Paracidovorax citrulli (strain AAC00-1) (Acidovorax citrulli).